We begin with the raw amino-acid sequence, 554 residues long: Glucose-6-phosphate isomerase (554 aa).

The active-site Proton donor is Glu359. Active-site residues include His390 and Lys518.

This sequence belongs to the GPI family.

The protein resides in the cytoplasm. The enzyme catalyses alpha-D-glucose 6-phosphate = beta-D-fructose 6-phosphate. The protein operates within carbohydrate biosynthesis; gluconeogenesis. Its pathway is carbohydrate degradation; glycolysis; D-glyceraldehyde 3-phosphate and glycerone phosphate from D-glucose: step 2/4. Functionally, catalyzes the reversible isomerization of glucose-6-phosphate to fructose-6-phosphate. In Pseudomonas syringae pv. syringae (strain B728a), this protein is Glucose-6-phosphate isomerase.